The chain runs to 913 residues: Auxilin (913 aa).

Met1 bears the N-acetylmethionine mark. Repeat copies occupy residues 36–39 (NLKD), 40–43 (NLKD), and 44–47 (TLKD). Residues 36–47 (NLKDNLKDTLKD) are 3 X 4 AA approximate tandem repeats. The Phosphatase tensin-type domain maps to 55-222 (SVTSYTKGDL…GYMCDLLADK (168 aa)). The residue at position 112 (Ser112) is a Phosphoserine. Cys164 (phosphocysteine intermediate) is an active-site residue. One can recognise a C2 tensin-type domain in the interval 228–366 (FKPLTIKSIT…FQVTLDVELQ (139 aa)). Residues 409–417 (PIDIPPDNP) carry the SH3-binding motif. The disordered stretch occupies residues 451–776 (QESEQSDDEL…GKGSSNLEGK (326 aa)). A phosphoserine mark is found at Ser453 and Ser456. Over residues 506–523 (AMSNSFSPPAAPPTNSEL) the composition is skewed to polar residues. Residues 554-572 (ASTQSTPRRSATSTSASPT) show a composition bias toward low complexity. 2 positions are modified to phosphoserine: Ser563 and Ser570. Polar residues predominate over residues 599 to 629 (FLNTSSASSDPFLQPTRSPSPTVHASSTPAV). Residues 654-669 (SAATSPTGSSHGTPTH) show a composition bias toward low complexity. In terms of domain architecture, J spans 849–913 (TKWKPVGMAD…FENQGQKPLY (65 aa)).

As to quaternary structure, forms a complex composed of HSPA8, CLTC and DNAJC6. Interacts with HSPA8/HSC70 in an ATP-dependent manner; this interaction stimulates the HSPA8's ATPase activity. Interacts with CLTC; this interaction produces a local change in heavy-chain contacts, creating a detectable global distortion of the clathrin coat. Interacts with AP2A2. Interacts with DNM1(GTP-bound form); this interaction allows clathrin-coated vesicle (CCV) formation at the plasma membrane. Post-translationally, phosphorylation at Ser-570 modulates its ability to bind CLTC and therefore the synaptic vesicle endocytosis (SVE). The N-terminus is blocked. As to expression, expressed in various brain regions, including cerebellum, corpus callosum, cortex, striatum, brainstem, pons, putamen, spinal cord and substantia nigra. Very low expression in non-neural tissues such as leukocytes, liver, adipose tissue, skeletal muscle and bone marrow.

Its subcellular location is the cytoplasmic vesicle. It is found in the clathrin-coated vesicle. May act as a protein phosphatase and/or a lipid phosphatase. Co-chaperone that recruits HSPA8/HSC70 to clathrin-coated vesicles (CCVs) and promotes the ATP-dependent dissociation of clathrin from CCVs and participates in clathrin-mediated endocytosis of synaptic vesicles and their recycling and also in intracellular trafficking. Firstly, binds tightly to the clathrin cages, at a ratio of one DNAJC6 per clathrin triskelion. The HSPA8:ATP complex then binds to the clathrin-auxilin cage, initially at a ratio of one HSPA8 per triskelion leading to ATP hydrolysis stimulation and causing a conformational change in the HSPA8. This cycle is repeated three times to drive to a complex containing the clathrin-auxilin cage associated to three HSPA8:ADP complex. The ATP hydrolysis of the third HSPA8:ATP complex leads to a concerted dismantling of the cage into component triskelia. Then, dissociates from the released triskelia and be recycled to initiate another cycle of HSPA8's recruitment. Also acts during the early steps of clathrin-coated vesicle (CCV) formation through its interaction with the GTP bound form of DNM1. This Homo sapiens (Human) protein is Auxilin.